Reading from the N-terminus, the 99-residue chain is UPF0473 protein SMU_2077c (99 aa).

Belongs to the UPF0473 family.

This Streptococcus mutans serotype c (strain ATCC 700610 / UA159) protein is UPF0473 protein SMU_2077c.